The primary structure comprises 891 residues: Tubulin polyglutamylase TTLL6 (891 aa).

Disordered regions lie at residues 1–25 and 44–106; these read MGAL…SSPA and SQAR…KRKK. Residues 63–76 show a composition bias toward basic and acidic residues; sequence SEEKGDSSKEDPKE. Over residues 88 to 99 the composition is skewed to low complexity; that stretch reads GAQNGLQNAQQQ. A TTL domain is found at 106-449; that stretch reads KKRLVINLSS…ESCDKKKVLE (344 aa). ATP is bound by residues lysine 223, 229 to 230, 251 to 254, and 264 to 266; these read QG, QLYI, and KFD. Glutamine 229 is an a protein binding site. Position 290 (arginine 290) interacts with L-glutamate. An ATP-binding site is contributed by 312–313; it reads TN. Tyrosine 314, serine 315, and lysine 332 together coordinate L-glutamate. Residues aspartate 395, glutamate 408, and asparagine 410 each coordinate Mg(2+). Histidine 411 contacts a protein. The c-MTBD region stretch occupies residues 420–499; sequence RLDKEVKDGL…CGGFRLIYPS (80 aa). L-glutamate is bound at residue lysine 426. 4 disordered regions span residues 546–584, 607–636, 687–711, and 800–820; these read QMKK…ATQA, GERK…LTSA, TTPE…TASS, and NNLS…DSSG. The segment covering 687 to 699 has biased composition (polar residues); that stretch reads TTPESTTQLSISP.

The protein belongs to the tubulin--tyrosine ligase family. Found in a complex with CEP41. Requires Mg(2+) as cofactor.

The protein resides in the cytoplasm. It localises to the cytoskeleton. The protein localises to the cilium axoneme. It is found in the cilium basal body. The catalysed reaction is L-glutamyl-[protein] + L-glutamate + ATP = gamma-L-glutamyl-L-glutamyl-[protein] + ADP + phosphate + H(+). It carries out the reaction (L-glutamyl)(n)-gamma-L-glutamyl-L-glutamyl-[protein] + L-glutamate + ATP = (L-glutamyl)(n+1)-gamma-L-glutamyl-L-glutamyl-[protein] + ADP + phosphate + H(+). Functionally, polyglutamylase which modifies both tubulin and non-tubulin proteins, generating alpha-linked polyglutamate side chains on the gamma-carboxyl group of specific glutamate residues of target proteins. Preferentially mediates ATP-dependent long polyglutamate chain elongation over the initiation step of the polyglutamylation reaction. Preferentially modifies the alpha-tubulin tail over a beta-tail. Promotes tubulin polyglutamylation which stimulates spastin/SPAST-mediated microtubule severing, thereby regulating microtubule functions. Mediates microtubule polyglutamylation in primary cilia axoneme, which is important for ciliary structural formation and motility. Mediates microtubule polyglutamylation in motile cilia, necessary for the regulation of ciliary coordinated beating. Polyglutamylates non-tubulin protein nucleotidyltransferase CGAS, leading to CGAS DNA-binding inhibition, thereby preventing antiviral defense response. The polypeptide is Tubulin polyglutamylase TTLL6 (Homo sapiens (Human)).